The sequence spans 785 residues: MNKRSLRVLEFNKVKEILKKYAYSSSAKKLVDELVPYDNTYEINNSLEESNEALEILMKKGNPPIEGLCDIGDILQRAKKGGTLTPEQLLKVLGMLTATRRMQEFFKREEQEVSFPKLEDLAYILAPINDLEKEIERSILSEDEVSDNASTTLYNIRRSLKEKNSSVREKINSIVRSNSKYLQDSLYTIRGDRYVIPVKAEYKSSVPGLVHDQSSTGATLFIEPMGLVNLNNEIKELMLKEKAEIDRVLSALSLKVKMNAEHCESNLKILTNLDFIFSKGKYACELNAIKPMVRDDGIFNIMSGRHPLIEKDKVVPLDVVLGDEFDTLMITGPNTGGKTVTLKTVGLLHIMALSGLLIPASSNSSVSFFKEVFADIGDEQSIEQSLSTFSSHLTNIVNIMEYDNRQSLILFDELGGGTDPAEGAALAIAIIENLSSKGAKLIATTHYSELKAYALNKDRVENASVEFDINTLRPTYRLLIGVPGKSNAFEISKRIGLGKEVIDCAKNYMSKENLEFEGLIRNLQEKSIIAKKDARDAKVIKDEADNLKKKYEQKLERLEKVKDKAYMEAREEAKKIVANAKDEADEILKAMRELEKLGIGSGGRQRLEEERKKLKDSLEEKEKNLYKMKENDGEVLEKVALGMEAFLPSLNQTVVVISMPDNRGEVQVEAGIMKISVKLKDLRKTKQSKVEKVKKKRELKLHFSKVENRIDLRGLDAEEACYRVDKYLDDAYMGNLGEVTIVHGKGTGILRKAINDMLKRHVHVKNYRLGGYGEGGDGATIVELK.

332-339 (GPNTGGKT) is a binding site for ATP. Residues 710–785 (IDLRGLDAEE…GDGATIVELK (76 aa)) enclose the Smr domain.

Belongs to the DNA mismatch repair MutS family. MutS2 subfamily. Homodimer. Binds to stalled ribosomes, contacting rRNA.

In terms of biological role, endonuclease that is involved in the suppression of homologous recombination and thus may have a key role in the control of bacterial genetic diversity. Its function is as follows. Acts as a ribosome collision sensor, splitting the ribosome into its 2 subunits. Detects stalled/collided 70S ribosomes which it binds and splits by an ATP-hydrolysis driven conformational change. Acts upstream of the ribosome quality control system (RQC), a ribosome-associated complex that mediates the extraction of incompletely synthesized nascent chains from stalled ribosomes and their subsequent degradation. Probably generates substrates for RQC. In Clostridium botulinum (strain Eklund 17B / Type B), this protein is Endonuclease MutS2.